We begin with the raw amino-acid sequence, 160 residues long: Transcriptional repressor NrdR (160 aa).

A zinc finger spans residues Cys-3–Cys-34. Residues Ile-49–Asp-139 form the ATP-cone domain.

The protein belongs to the NrdR family. The cofactor is Zn(2+).

Functionally, negatively regulates transcription of bacterial ribonucleotide reductase nrd genes and operons by binding to NrdR-boxes. This chain is Transcriptional repressor NrdR, found in Synechococcus sp. (strain CC9605).